A 355-amino-acid chain; its full sequence is Phosphate acyltransferase (355 aa).

The protein belongs to the PlsX family. Homodimer. Probably interacts with PlsY.

The protein localises to the cytoplasm. The catalysed reaction is a fatty acyl-[ACP] + phosphate = an acyl phosphate + holo-[ACP]. The protein operates within lipid metabolism; phospholipid metabolism. Catalyzes the reversible formation of acyl-phosphate (acyl-PO(4)) from acyl-[acyl-carrier-protein] (acyl-ACP). This enzyme utilizes acyl-ACP as fatty acyl donor, but not acyl-CoA. This Rhodospirillum centenum (strain ATCC 51521 / SW) protein is Phosphate acyltransferase.